The chain runs to 299 residues: Ribonuclease H2 subunit A (299 aa).

The residue at position 1 (Met1) is an N-acetylmethionine. In terms of domain architecture, RNase H type-2 spans 28–251 (PCVLGVDEAG…AQSILESEAE (224 aa)). 3 residues coordinate a divalent metal cation: Asp34, Glu35, and Asp142. 2 positions are modified to phosphothreonine: Thr205 and Thr217. A disordered region spans residues 250–272 (AEDVKWEDSETGDPKGPGKIKSY). Ser258 carries the post-translational modification Phosphoserine.

This sequence belongs to the RNase HII family. Eukaryotic subfamily. As to quaternary structure, the RNase H2 complex is a heterotrimer composed of the catalytic subunit RNASEH2A and the non-catalytic subunits RNASEH2B and RNASEH2C. Requires Mn(2+) as cofactor. The cofactor is Mg(2+).

The protein localises to the nucleus. It carries out the reaction Endonucleolytic cleavage to 5'-phosphomonoester.. In terms of biological role, catalytic subunit of RNase HII, an endonuclease that specifically degrades the RNA of RNA:DNA hybrids. Participates in DNA replication, possibly by mediating the removal of lagging-strand Okazaki fragment RNA primers during DNA replication. Mediates the excision of single ribonucleotides from DNA:RNA duplexes. This chain is Ribonuclease H2 subunit A (RNASEH2A), found in Bos taurus (Bovine).